The chain runs to 1790 residues: MTSAKVLYFSGEIPQGDPEGDQRTLFRKLHLLSKERDHVVLASLLECVTLTLKDECSKLSPQYRDLLPPFESVLDLTDHVVQLRKTPLGGAIERVLVLVFQLGSLVAYHEAHPLEYNFTPASTVIIGRGSGLLSAAAIGLSPSIVMVPSIAKEIARISFRFGLVVDKVCRSLEVSSDEINSDGAWVYCVHGIGEKEARDAVNQFNEIKAYPSTNGASVFNVDDAGNSVSIGGPPKTLEALFSESNIFKKTKNVAMRKIQGMWHTDRVYGPEHVEQIVPKIESARELHVPLISPVSGDPFRETEAGPLLEQIMEEILMERVRWDMIIETVSKQLKQLMPKSVQLVSIQPSHYNQNMLERWKSELPDAAVSGLTMMPAILELALEQSPPKDTRSSKIAVVGMSCRFPGSDTTEEFWERLMLGEDMHRHIPPDRFDVETHVDPTGKRHNTSKTSYGCFVDNPGLFDAMFFGMSPREAEQTDPMQRLALVTAYEALEKAGYVDGRGVIHRKRVGTFYGQASDDYREVNSGQEVGTYFIPGGCRAFGPGRINYFLNFWGPSFSVDTACSSSLAAIQAACSSLWSGDIDMAITGGMNILSNSDVYAGLSQGHFLSPTGGCKTWDEGADGYCRSDGVGSVVLKRLEDAEADNDNILAVVLSAATSHSAEAVSITHPHDAAQALLYNQIVRRAGIDPLEVGYVEMHGTGTQAGDPTEMRSVTSVFAPPHIQGSRPIPLHVGSVKANMGHGEAAAGIMAFVKTMLVFQNGIIPPHIGVKTGLNPALPDLDKAGVVIPFRAANWRPTGTKKRLAMVNNFGAAGGNTAMIIEEAKARPRLCEDIREAHAITISAKTAVSLSLNIKRLVEYIESAQDLSLADVAYTVSARRRHYEYRKSVVVRSLAEAIKHLQPHIETAKSQTPTLVKRPPVAFAFAGQGTFYVGIAAQIYRDSPFFRAQIDQFDNLARRQNFPSFLPAINKTCAHEDLPASSIHLAIVCVEVALARMCMTFGIKPCAVIGHSLGEYAALAVAEVLSDSDTVFLVGTRATILESNCSPYTHGMISVRASVDDISREADGLPFEVSCINGPNETVIGGTVENLEAVADRLSKVGYRKTRLDVPHAYHTAQMDNVVNELIRQSQGIAYNTPKIPIMSPRDSSVIETGANIDSSYLPTSLKKAVDFAGALNAAWEAGVVSKSTVWLELSHHPVCSGFINRTLPNTSLTCSTLHRDSDNWTSLLKTLSSLYEVGLNIDWNEYHRPFEHALRLVSAPTYAWNNKDYWIQYRGDWNLTKGQVLPEAELPAVSGFRTSSIHRLYSENYDSSTAHLLGECNMTDLSLKGVIEGHAMNGYGVASSFLHAEMAFTLARRIQEKASLSTFTGMGINVTNFEYHDPVVKDASSLDPYPIVVDAEANLEMGEVQIKWFNPAIEKWYCHAIAYYEDPSTWLSNWSRTTRLVTSRIDALVAMSNKGMANKLTTSLAYTLFGKLVDYSSMYHTMQWVILNEDEAVAEVVFPADTQGDWAVPPHFIDGVVSLSGFILNGGTHFDNVNNFFITPSWKSMRFAKPLAPGGRYLTYVRMIPEGVDDKGRLGSYVGDVYILQDGEIVGVVEAILFRQWPRIMLNRFFQPVGMAPPAPRVEKKRDAGRGTLPSSSSLQEKTTATAVTAKITARFPGSVITPSRSAPISKSGSSPKIVPQLDYSLLTPRTSPNSDERIEKTDSDSGFEEADGANDVTSRAVEILAEELAVDKGLLTDECEIADIGVDSLMSLVISQKLREDLGIEVRDAFYLEVTTIGDLKKLLS.

The N-terminal acylcarrier protein transacylase domain (SAT) stretch occupies residues 20 to 263 (GDQRTLFRKL…AMRKIQGMWH (244 aa)). Positions 392–822 (SSKIAVVGMS…GGNTAMIIEE (431 aa)) constitute a Ketosynthase family 3 (KS3) domain. Residues C563, H698, and H741 each act as for beta-ketoacyl synthase activity in the active site. The malonyl-CoA:ACP transacylase (MAT) domain stretch occupies residues 922 to 1223 (FAFAGQGTFY…CSTLHRDSDN (302 aa)). A product template (PT) domain region spans residues 1298 to 1615 (TSSIHRLYSE…PRIMLNRFFQ (318 aa)). The interval 1302-1435 (HRLYSENYDS…AYYEDPSTWL (134 aa)) is N-terminal hotdog fold. In terms of domain architecture, PKS/mFAS DH spans 1302–1611 (HRLYSENYDS…FRQWPRIMLN (310 aa)). Residue H1334 is the Proton acceptor; for dehydratase activity of the active site. The C-terminal hotdog fold stretch occupies residues 1460–1611 (MANKLTTSLA…FRQWPRIMLN (152 aa)). Residue D1518 is the Proton donor; for dehydratase activity of the active site. 2 disordered regions span residues 1621–1648 (PPAP…EKTT) and 1686–1718 (LDYS…ADGA). A compositionally biased stretch (basic and acidic residues) spans 1699 to 1708 (SDERIEKTDS). The 75-residue stretch at 1716-1790 (DGANDVTSRA…TIGDLKKLLS (75 aa)) folds into the Carrier domain. At S1753 the chain carries O-(pantetheine 4'-phosphoryl)serine.

It catalyses the reaction 6 malonyl-CoA + acetyl-CoA + 4 H(+) = 2-(2,4-dihydroxy-6-oxidobenzoyl)-5-hydroxy-3-methylbenzenolate + 6 CO2 + 7 CoA + H2O. It participates in secondary metabolite biosynthesis; terpenoid biosynthesis. In terms of biological role, norlichexanthone synthase; part of the gene cluster that mediates the biosynthesis of griseofulvin, an important antifungal drug that has been in use for a long time for treating dermatophyte infections. The first step of the pathway is the formation of the heptaketide backbone by gsfA which is initiated by priming with acetyl-CoA, followed by sequential condensations of 6 malonyl-CoA units. The resulting benzophenone can undergo a spontaneous dehydration to form norlichexanthone. However, the true precursor for the griseofulvin biosynthesis is not norlichexanthone, but the heptaketide benzophenone that is O-methylated at 3-OH by gsfB to produce griseophenone D which is further methylated at 9-OH by gsfC to yield griseophenone C. Griseophenone C is then substrate of halogenase gsfI which is responsible for the regio-specific chlorination at the C13 position to form griseophenone B. The cytochrome P450 gsfF catalyzes the coupling of orcinol and phloroglucinol rings in griseophenone B to form desmethyl-dehydrogriseofulvin A which is further methylated at 5-OH by gsfD to yield dehydrogriseofulvin. Finally, gsfE performs stereospecific reduction of enone 18 of dehydrogriseofulvin to afford the final product griseofulvin. This chain is Non-reducing polyketide synthase gsfA, found in Penicillium aethiopicum.